The primary structure comprises 259 residues: Type III pantothenate kinase (259 aa).

6 to 13 serves as a coordination point for ATP; that stretch reads DVGNTNCT. Position 107-110 (107-110) interacts with substrate; the sequence is GSDR. The active-site Proton acceptor is D109. D129 is a K(+) binding site. T132 contacts ATP. T184 contacts substrate.

It belongs to the type III pantothenate kinase family. In terms of assembly, homodimer. NH4(+) is required as a cofactor. Requires K(+) as cofactor.

It is found in the cytoplasm. It carries out the reaction (R)-pantothenate + ATP = (R)-4'-phosphopantothenate + ADP + H(+). The protein operates within cofactor biosynthesis; coenzyme A biosynthesis; CoA from (R)-pantothenate: step 1/5. Functionally, catalyzes the phosphorylation of pantothenate (Pan), the first step in CoA biosynthesis. The polypeptide is Type III pantothenate kinase (Listeria innocua serovar 6a (strain ATCC BAA-680 / CLIP 11262)).